Reading from the N-terminus, the 137-residue chain is Large ribosomal subunit protein uL16 (137 aa).

The span at 1-17 shows a compositional bias: basic residues; the sequence is MLQPKRTKFRKQQKGRN. The tract at residues 1 to 24 is disordered; the sequence is MLQPKRTKFRKQQKGRNRGLAQSG.

Belongs to the universal ribosomal protein uL16 family. Part of the 50S ribosomal subunit.

Functionally, binds 23S rRNA and is also seen to make contacts with the A and possibly P site tRNAs. This chain is Large ribosomal subunit protein uL16, found in Dichelobacter nodosus (strain VCS1703A).